We begin with the raw amino-acid sequence, 464 residues long: Soluble pyridine nucleotide transhydrogenase (464 aa).

An FAD-binding site is contributed by 35-44; it reads DSRRQVGGNC.

This sequence belongs to the class-I pyridine nucleotide-disulfide oxidoreductase family. Requires FAD as cofactor.

The protein resides in the cytoplasm. It carries out the reaction NAD(+) + NADPH = NADH + NADP(+). In terms of biological role, conversion of NADPH, generated by peripheral catabolic pathways, to NADH, which can enter the respiratory chain for energy generation. The protein is Soluble pyridine nucleotide transhydrogenase of Pseudomonas fluorescens (strain ATCC BAA-477 / NRRL B-23932 / Pf-5).